The following is a 273-amino-acid chain: Ethanolamine ammonia-lyase small subunit (273 aa).

3 residues coordinate adenosylcob(III)alamin: Val164, Glu185, and Cys214.

Belongs to the EutC family. In terms of assembly, the basic unit is a heterodimer which dimerizes to form tetramers. The heterotetramers trimerize; 6 large subunits form a core ring with 6 small subunits projecting outwards. It depends on adenosylcob(III)alamin as a cofactor.

It localises to the bacterial microcompartment. The enzyme catalyses ethanolamine = acetaldehyde + NH4(+). The protein operates within amine and polyamine degradation; ethanolamine degradation. Functionally, catalyzes the deamination of various vicinal amino-alcohols to oxo compounds. Allows this organism to utilize ethanolamine as the sole source of nitrogen and carbon in the presence of external vitamin B12. In Pseudomonas paraeruginosa (strain DSM 24068 / PA7) (Pseudomonas aeruginosa (strain PA7)), this protein is Ethanolamine ammonia-lyase small subunit.